We begin with the raw amino-acid sequence, 356 residues long: DNA polymerase IV (356 aa).

Residues Ile-6–Gly-187 enclose the UmuC domain. Mg(2+) is bound by residues Asp-10 and Asp-105. The active site involves Glu-106.

This sequence belongs to the DNA polymerase type-Y family. In terms of assembly, monomer. Mg(2+) is required as a cofactor.

It is found in the cytoplasm. The enzyme catalyses DNA(n) + a 2'-deoxyribonucleoside 5'-triphosphate = DNA(n+1) + diphosphate. Functionally, poorly processive, error-prone DNA polymerase involved in untargeted mutagenesis. Copies undamaged DNA at stalled replication forks, which arise in vivo from mismatched or misaligned primer ends. These misaligned primers can be extended by PolIV. Exhibits no 3'-5' exonuclease (proofreading) activity. May be involved in translesional synthesis, in conjunction with the beta clamp from PolIII. The polypeptide is DNA polymerase IV (Staphylococcus saprophyticus subsp. saprophyticus (strain ATCC 15305 / DSM 20229 / NCIMB 8711 / NCTC 7292 / S-41)).